The primary structure comprises 353 residues: UPF0283 membrane protein YcjF (353 aa).

The span at 1–19 shows a compositional bias: basic and acidic residues; that stretch reads MSEPLKPRIDFAEPLKEEP. A disordered region spans residues 1–35; the sequence is MSEPLKPRIDFAEPLKEEPTSAFKAQQTFSEAESR. 3 consecutive transmembrane segments (helical) span residues 70–90, 100–120, and 213–233; these read MVMGGLALFGASVVGQGLQWT, VALGGCAAGALIIGAGVGSVV, and ESTLMIAVSPLALVDMAFIAW.

Belongs to the UPF0283 family.

It is found in the cell inner membrane. The chain is UPF0283 membrane protein YcjF from Salmonella choleraesuis (strain SC-B67).